The chain runs to 363 residues: Adenosine deaminase (363 aa).

Alanine 2 is modified (N-acetylalanine). Residues histidine 15 and histidine 17 each coordinate Zn(2+). Positions 17 and 19 each coordinate substrate. Residue lysine 54 is modified to N6-acetyllysine. Glycine 184 provides a ligand contact to substrate. Histidine 214 serves as a coordination point for Zn(2+). The active-site Proton donor is glutamate 217. N6-acetyllysine is present on lysine 232. Aspartate 295 is a Zn(2+) binding site. Aspartate 296 is a binding site for substrate.

This sequence belongs to the metallo-dependent hydrolases superfamily. Adenosine and AMP deaminases family. Interacts with DPP4 (via extracellular domain). Interacts with PLG (via Kringle 4 domain); the interaction stimulates PLG activation when in complex with DPP4. The cofactor is Zn(2+). In terms of tissue distribution, expressed in gastrointestinal tissues (at protein level).

Its subcellular location is the cell membrane. It is found in the cell junction. The protein resides in the cytoplasmic vesicle lumen. It localises to the cytoplasm. The protein localises to the lysosome. The catalysed reaction is adenosine + H2O + H(+) = inosine + NH4(+). It carries out the reaction 2'-deoxyadenosine + H2O + H(+) = 2'-deoxyinosine + NH4(+). It catalyses the reaction cordycepin + H2O + H(+) = 3'-deoxyinosine + NH4(+). In terms of biological role, catalyzes the hydrolytic deamination of adenosine and 2-deoxyadenosine. Plays an important role in purine metabolism and in adenosine homeostasis. Modulates signaling by extracellular adenosine, and so contributes indirectly to cellular signaling events. Acts as a positive regulator of T-cell coactivation, by binding DPP4. Its interaction with DPP4 regulates lymphocyte-epithelial cell adhesion. Enhances dendritic cell immunogenicity by affecting dendritic cell costimulatory molecule expression and cytokines and chemokines secretion. Enhances CD4+ T-cell differentiation and proliferation. Acts as a positive modulator of adenosine receptors ADORA1 and ADORA2A, by enhancing their ligand affinity via conformational change. Stimulates plasminogen activation. Plays a role in male fertility. Plays a protective role in early postimplantation embryonic development. Also responsible for the deamination of cordycepin (3'-deoxyadenosine), a fungal natural product that shows antitumor, antibacterial, antifungal, antivirus, and immune regulation properties. The polypeptide is Adenosine deaminase (ADA) (Bos taurus (Bovine)).